Reading from the N-terminus, the 539-residue chain is Dopamine receptor 2 (539 aa).

The Extracellular segment spans residues 1–113; it reads MVDDNGSSPE…LPNDRVGLLA (113 aa). N-linked (GlcNAc...) asparagine glycosylation is found at asparagine 5, asparagine 31, asparagine 47, and asparagine 68. A helical transmembrane segment spans residues 114-134; that stretch reads FLFLFSFATVFGNSLVILAVI. At 135 to 145 the chain is on the cytoplasmic side; sequence RERYLHTATNY. Residues 146 to 166 traverse the membrane as a helical segment; the sequence is FITSLAVADCLVGLVVMPFSA. The Extracellular portion of the chain corresponds to 167–189; sequence LYEVLENTWFFGTDWCDIWRSLD. Cysteine 182 and cysteine 261 are joined by a disulfide. A helical membrane pass occupies residues 190–206; that stretch reads VLFSTASILNLCVISLD. The Cytoplasmic portion of the chain corresponds to 207–227; it reads RYWAITDPFSYPMRMTVKRAA. A helical membrane pass occupies residues 228-248; that stretch reads GLIAAVWICSSAISFPAIVWW. Topologically, residues 249–266 are extracellular; the sequence is RAARDGEMPAYKCTFTEH. The chain crosses the membrane as a helical span at residues 267–287; that stretch reads LGYLVFSSTISFYLPLLVMVF. At 288–420 the chain is on the cytoplasmic side; that stretch reads TYCRIYRAAV…FAKEKKAAKT (133 aa). The interval 326 to 387 is disordered; the sequence is GGTTRDQQNQ…EPDDEPLSAL (62 aa). Over residues 337 to 352 the composition is skewed to gly residues; that stretch reads SGGGGGGGGGGGGGGS. Basic residues predominate over residues 356-367; it reads SHSHSHHHHHNH. Residues 421–441 traverse the membrane as a helical segment; that stretch reads LGIVMGVFIICWLPFFVVNLL. Residues 442-453 lie on the Extracellular side of the membrane; the sequence is SGFCIECIEHEE. Residues 454–474 form a helical membrane-spanning segment; it reads IVSAIVTWLGWINSCMNPVIY. The Cytoplasmic portion of the chain corresponds to 475 to 539; it reads ACWSRDFRRA…RHNSCEQTYI (65 aa). Residues cysteine 492 and cysteine 493 are each lipidated (S-palmitoyl cysteine).

This sequence belongs to the G-protein coupled receptor 1 family. In terms of tissue distribution, expressed in both central and peripheral nervous systems.

It localises to the cell membrane. In terms of biological role, receptor for dopamine. The activity of this receptor is mediated by G proteins which activate adenylyl cyclase. Also capable of generating a calcium signal. In terms of antagonist responses, would be classed with the D1-like dopamine receptor group. This receptor is an attractive candidate for initiating biochemical cascades underlying olfactory learning. This chain is Dopamine receptor 2 (Dop1R2), found in Drosophila melanogaster (Fruit fly).